Here is a 394-residue protein sequence, read N- to C-terminus: Elongation factor Tu (394 aa).

In terms of domain architecture, tr-type G spans 10–204 (KPHVNVGTIG…ALDSYIPEPE (195 aa)). The tract at residues 19–26 (GHVDHGKT) is G1. 19-26 (GHVDHGKT) serves as a coordination point for GTP. Residue T26 participates in Mg(2+) binding. The tract at residues 60-64 (GITIS) is G2. Positions 81 to 84 (DCPG) are G3. Residues 81 to 85 (DCPGH) and 136 to 139 (NKCD) each bind GTP. The interval 136–139 (NKCD) is G4. The interval 174–176 (SAL) is G5.

This sequence belongs to the TRAFAC class translation factor GTPase superfamily. Classic translation factor GTPase family. EF-Tu/EF-1A subfamily. As to quaternary structure, monomer.

It localises to the cytoplasm. The enzyme catalyses GTP + H2O = GDP + phosphate + H(+). In terms of biological role, GTP hydrolase that promotes the GTP-dependent binding of aminoacyl-tRNA to the A-site of ribosomes during protein biosynthesis. This is Elongation factor Tu from Alteromonas mediterranea (strain DSM 17117 / CIP 110805 / LMG 28347 / Deep ecotype).